A 458-amino-acid polypeptide reads, in one-letter code: Alpha-1,3/1,6-mannosyltransferase ALG2 (458 aa).

2 N-linked (GlcNAc...) asparagine glycosylation sites follow: Asn-57 and Asn-169. A helical transmembrane segment spans residues 438–458; that stretch reads NISIIYVVSIIFAVLLKVFVF.

Belongs to the glycosyltransferase group 1 family.

It is found in the endoplasmic reticulum membrane. The enzyme catalyses a beta-D-Man-(1-&gt;4)-beta-D-GlcNAc-(1-&gt;4)-alpha-D-GlcNAc-diphospho-di-trans,poly-cis-dolichol + GDP-alpha-D-mannose = an alpha-D-Man-(1-&gt;3)-beta-D-Man-(1-&gt;4)-beta-D-GlcNAc-(1-&gt;4)-alpha-D-GlcNAc-diphospho-di-trans,poly-cis-dolichol + GDP + H(+). It carries out the reaction an alpha-D-Man-(1-&gt;3)-beta-D-Man-(1-&gt;4)-beta-D-GlcNAc-(1-&gt;4)-alpha-D-GlcNAc-diphospho-di-trans,poly-cis-dolichol + GDP-alpha-D-mannose = an alpha-D-Man-(1-&gt;3)-[alpha-D-Man-(1-&gt;6)]-beta-D-Man-(1-&gt;4)-beta-D-GlcNAc-(1-&gt;4)-alpha-D-GlcNAc-diphospho-di-trans,poly-cis-dolichol + GDP + H(+). It functions in the pathway protein modification; protein glycosylation. Its function is as follows. Mannosylates Man(2)GlcNAc(2)-dolichol diphosphate and Man(1)GlcNAc(2)-dolichol diphosphate to form Man(3)GlcNAc(2)-dolichol diphosphate. The chain is Alpha-1,3/1,6-mannosyltransferase ALG2 (ALG2) from Candida glabrata (strain ATCC 2001 / BCRC 20586 / JCM 3761 / NBRC 0622 / NRRL Y-65 / CBS 138) (Yeast).